A 94-amino-acid chain; its full sequence is Neutrophil antibiotic peptide NP-1 (94 aa).

The first 19 residues, 1 to 19, serve as a signal peptide directing secretion; the sequence is MRTLTLLTALLLLALHTQA. Residues 20 to 62 constitute a propeptide that is removed on maturation; the sequence is KSPQGTAEEAPDQEQLVMEDQDISISFGGDKGTALQDADVKAG. 3 cysteine pairs are disulfide-bonded: Cys65-Cys93, Cys67-Cys82, and Cys72-Cys92. Tyr84 carries the post-translational modification Phosphotyrosine.

Belongs to the alpha-defensin family. Highest expression in bone marrow and to a much lesser extent in small intestine.

Its subcellular location is the secreted. In terms of biological role, active in vitro against S.aureus, fungi, Gram-positive and Gram-negative bacteria and to a lesser extent against an enveloped virus. This Rattus norvegicus (Rat) protein is Neutrophil antibiotic peptide NP-1.